A 211-amino-acid polypeptide reads, in one-letter code: HTH-type transcriptional regulator AlkX (211 aa).

Residues 22–82 (ALLRDSVLDA…GYALRLADRL (61 aa)) enclose the HTH tetR-type domain. The H-T-H motif DNA-binding region spans 45–64 (TLSDVARAAGISRQTIYNEF).

As to quaternary structure, homodimer.

The protein localises to the cytoplasm. With respect to regulation, DNA-binding activity may be regulated by fatty acids. In terms of biological role, represses the expression of the alkB-rubAB operon, which encodes the alkane hydroxylase AlkB and the rubredoxins RubA and RubB. Acts by binding to the promoter region of the operon. In addition, EMSA analysis show that AlkX can bind to the promoter region of mmpS1 and mmpL3 and to the intragenic region of mmpL11, suggesting that it may participate in the regulatory network that controls the expression of MmpL lipid transporters. The chain is HTH-type transcriptional regulator AlkX from Mycobacterium tuberculosis (strain ATCC 25618 / H37Rv).